The sequence spans 296 residues: Uridine phosphorylase A (296 aa).

Phosphate-binding positions include glycine 46, arginine 77, and 121 to 124; that span reads RLGT. Uridine-binding positions include 125–126 and 201–203; these read SG and QGR.

This sequence belongs to the PNP/UDP phosphorylase family. Homodimer.

The enzyme catalyses uridine + phosphate = alpha-D-ribose 1-phosphate + uracil. The protein operates within pyrimidine metabolism; UMP biosynthesis via salvage pathway; uracil from uridine (phosphorylase route): step 1/1. Functionally, catalyzes the reversible phosphorylytic cleavage of uridine and deoxyuridine to uracil and ribose- or deoxyribose-1-phosphate. The produced molecules are then utilized as carbon and energy sources or in the rescue of pyrimidine bases for nucleotide synthesis. The chain is Uridine phosphorylase A from Schistosoma mansoni (Blood fluke).